The chain runs to 822 residues: BDNF/NT-3 growth factors receptor (822 aa).

Residues 1–31 (MSSWIRWHGPAMARLWGFCWLVVGFWRAAFA) form the signal peptide. 2 disulfide bridges follow: Cys32/Cys38 and Cys36/Cys45. An LRRNT domain is found at 32–61 (CPTSCKCSASRIWCSDPSPGIVAFPRLEPN). The Extracellular portion of the chain corresponds to 32-430 (CPTSCKCSAS…DVTDKTGREH (399 aa)). Asn67, Asn95, and Asn121 each carry an N-linked (GlcNAc...) asparagine glycan. LRR repeat units lie at residues 92 to 113 (GLRNLTIVDSGLKFVAHKAFLK) and 116 to 137 (NLQHINFTRNKLTSLSRKHFRH). An LRRCT domain is found at 148 to 196 (NPFTCSCDIMWIKTLQEAKSSPDTQDLYCLNESSKNIPLANLQIPNCGL). Intrachain disulfides connect Cys152-Cys176 and Cys154-Cys194. N-linked (GlcNAc...) asparagine glycosylation is found at Asn178, Asn205, Asn241, Asn254, Asn280, Asn325, Asn338, and Asn412. 2 consecutive Ig-like C2-type domains span residues 197–282 (PSAN…VNLT) and 295–365 (PTSD…IAKN). The cysteines at positions 218 and 266 are disulfide-linked. A disulfide bond links Cys302 and Cys345. Residues 431–454 (LSVYAVVVIASVVGFCLLVMLFLL) traverse the membrane as a helical segment. An interaction with MAPK8IP3/JIP3 region spans residues 455-466 (KLARHSKFGMKG). The Cytoplasmic segment spans residues 455 to 822 (KLARHSKFGM…ASPVYLDILG (368 aa)). The tract at residues 475–498 (DDSASPLHHISNGSNTPSSSEGGP) is disordered. Over residues 485 to 495 (SNGSNTPSSSE) the composition is skewed to polar residues. The residue at position 516 (Tyr516) is a Phosphotyrosine; by autocatalysis. Positions 538-807 (IVLKRELGEG…KNIKGIHTLL (270 aa)) constitute a Protein kinase domain. ATP-binding positions include 544 to 552 (LGEGAFGKV) and Lys572. Catalysis depends on Asp676, which acts as the Proton acceptor. Phosphotyrosine; by autocatalysis occurs at positions 702, 706, 707, and 817.

It belongs to the protein kinase superfamily. Tyr protein kinase family. Insulin receptor subfamily. As to quaternary structure, exists in a dynamic equilibrium between monomeric (low affinity) and dimeric (high affinity) structures. Interacts (phosphorylated upon activation by BDNF) with SHC1; mediates SHC1 phosphorylation and activation. Interacts (phosphorylated upon activation by BDNF) with PLCG1 and/or PLCG2; mediates PLCG1 phosphorylation and activation. Interacts with SH2B1 and SH2B2. Interacts with NGFR; may regulate the ligand specificity of the receptor. Interacts with SORCS2; this interaction is important for normal targeting to post-synaptic densities in response to high-frequency stimulation. Interacts (phosphorylated upon ligand-binding) with SH2D1A; regulates NTRK2. Interacts with SQSTM1 and KIDINS220. Interacts (phosphorylated upon ligand-binding) with FRS2; activates the MAPK signaling pathway. Interacts with APPL1. Interacts with MAPK8IP3/JIP3 and KLC1; interaction with KLC1 is mediated by MAPK8IP3/JIP3. Interacts with SORL1; this interaction facilitates NTRK2 trafficking between synaptic plasma membranes, postsynaptic densities and cell soma, hence positively regulates BDNF signaling. Interacts with SLITRK2. In terms of processing, phosphorylated. Undergoes ligand-mediated autophosphorylation that is required for interaction with SHC1 and PLCG1 and other downstream effectors. Isoform TrkB-T-Shc is not phosphorylated. Post-translationally, ubiquitinated. Undergoes polyubiquitination upon activation; regulated by NGFR. Ubiquitination regulates the internalization of the receptor. As to expression, isoform TrkB is expressed in the central and peripheral nervous system. In the central nervous system (CNS), expression is observed in the cerebral cortex, hippocampus, thalamus, choroid plexus, granular layer of the cerebellum, brain stem, and spinal cord. In the peripheral nervous system, it is expressed in many cranial ganglia, the ophthalmic nerve, the vestibular system, multiple facial structures, the submaxillary glands, and dorsal root ganglia. Isoform TrkB-T1 is mainly expressed in the brain but also detected in other tissues including pancreas, kidney and heart. Isoform TrkB-T-Shc is predominantly expressed in the brain.

The protein localises to the cell membrane. Its subcellular location is the endosome membrane. The protein resides in the early endosome membrane. It localises to the cell projection. It is found in the axon. The protein localises to the dendrite. Its subcellular location is the cytoplasm. The protein resides in the perinuclear region. It localises to the postsynaptic density. The catalysed reaction is L-tyrosyl-[protein] + ATP = O-phospho-L-tyrosyl-[protein] + ADP + H(+). The neuronal activity and the influx of calcium positively regulate the kinase activity and the internalization of the receptor which are both important for active signaling. Regulated by NGFR that may control the internalization of the receptor. NGFR may also stimulate the activation by BDNF compared to NTF3 and NTF4. SH2D1A inhibits the autophosphorylation of the receptor, and alters the recruitment and activation of downstream effectors and signaling cascades. The formation of active receptors dimers able to fully transduce the ligand-mediated signal, may be negatively regulated by the formation of inactive heterodimers with the non-catalytic isoforms. Receptor tyrosine kinase involved in the development and the maturation of the central and the peripheral nervous systems through regulation of neuron survival, proliferation, migration, differentiation, and synapse formation and plasticity. Receptor for BDNF/brain-derived neurotrophic factor and NTF4/neurotrophin-4. Alternatively can also bind NTF3/neurotrophin-3 which is less efficient in activating the receptor but regulates neuron survival through NTRK2. Upon ligand-binding, undergoes homodimerization, autophosphorylation and activation. Recruits, phosphorylates and/or activates several downstream effectors including SHC1, FRS2, SH2B1, SH2B2 and PLCG1 that regulate distinct overlapping signaling cascades. Through SHC1, FRS2, SH2B1, SH2B2 activates the GRB2-Ras-MAPK cascade that regulates for instance neuronal differentiation including neurite outgrowth. Through the same effectors controls the Ras-PI3 kinase-AKT1 signaling cascade that mainly regulates growth and survival. Through PLCG1 and the downstream protein kinase C-regulated pathways controls synaptic plasticity. Thereby, plays a role in learning and memory by regulating both short term synaptic function and long-term potentiation. PLCG1 also leads to NF-Kappa-B activation and the transcription of genes involved in cell survival. Hence, it is able to suppress anoikis, the apoptosis resulting from loss of cell-matrix interactions. May also play a role in neutrophin-dependent calcium signaling in glial cells and mediate communication between neurons and glia. The polypeptide is BDNF/NT-3 growth factors receptor (NTRK2) (Homo sapiens (Human)).